A 76-amino-acid polypeptide reads, in one-letter code: DNA polymerase III subunit theta (76 aa).

The DNA polymerase holoenzyme is a complex that contains 10 different types of subunits. These subunits are organized into 3 functionally essential subassemblies: the pol III core, the beta sliding clamp processivity factor and the clamp-loading complex. The pol III core (subunits alpha,epsilon and theta) contains the polymerase and the 3'-5' exonuclease proofreading activities. The polymerase is tethered to the template via the sliding clamp processivity factor. The clamp-loading complex assembles the beta processivity factor onto the primer template and plays a central role in the organization and communication at the replication fork. This complex contains delta, delta', psi and chi, and copies of either or both of two different DnaX proteins, gamma and tau. The composition of the holoenzyme is, therefore: (alpha,epsilon,theta)[2]-(gamma/tau)[3]-delta,delta', psi,chi-beta[4].

It carries out the reaction DNA(n) + a 2'-deoxyribonucleoside 5'-triphosphate = DNA(n+1) + diphosphate. Functionally, DNA polymerase III is a complex, multichain enzyme responsible for most of the replicative synthesis in bacteria. This DNA polymerase also exhibits 3' to 5' exonuclease activity. In terms of biological role, the exact function of the theta subunit is unknown. This is DNA polymerase III subunit theta (holE) from Escherichia coli O157:H7.